The chain runs to 169 residues: Protein-export protein SecB (169 aa).

It belongs to the SecB family. In terms of assembly, homotetramer, a dimer of dimers. One homotetramer interacts with 1 SecA dimer.

It is found in the cytoplasm. Its function is as follows. One of the proteins required for the normal export of preproteins out of the cell cytoplasm. It is a molecular chaperone that binds to a subset of precursor proteins, maintaining them in a translocation-competent state. It also specifically binds to its receptor SecA. This Pseudoalteromonas atlantica (strain T6c / ATCC BAA-1087) protein is Protein-export protein SecB.